The following is a 59-amino-acid chain: Inner kinetochore subunit fta6 (59 aa).

As to quaternary structure, component of the inner kinetochore constitutive centromere-associated network (CCAN) (also known as central kinetochore Sim4 complex in fission yeast), which is composed of at least cnl2, cnp3, cnp20, fta1, fta2, fta3, fta4, fta6, fta7, mal2, mhf1, mhf2, mis6, mis15, mis17, sim4 and wip1.

Its subcellular location is the nucleus. It localises to the chromosome. The protein localises to the centromere. It is found in the kinetochore. The protein resides in the cytoplasm. Its subcellular location is the cytoskeleton. It localises to the microtubule organizing center. The protein localises to the spindle pole body. In terms of biological role, component of the kinetochore, a multiprotein complex that assembles on centromeric DNA and attaches chromosomes to spindle microtubules, mediating chromosome segregation and sister chromatid segregation during meiosis and mitosis. Component of the inner kinetochore constitutive centromere-associated network (CCAN), which serves as a structural platform for outer kinetochore assembly. This chain is Inner kinetochore subunit fta6 (fta6), found in Schizosaccharomyces pombe (strain 972 / ATCC 24843) (Fission yeast).